A 270-amino-acid polypeptide reads, in one-letter code: Malonyl-[acyl-carrier protein] O-methyltransferase (270 aa).

Belongs to the methyltransferase superfamily.

It catalyses the reaction malonyl-[ACP] + S-adenosyl-L-methionine = malonyl-[ACP] methyl ester + S-adenosyl-L-homocysteine. Its pathway is cofactor biosynthesis; biotin biosynthesis. In terms of biological role, converts the free carboxyl group of a malonyl-thioester to its methyl ester by transfer of a methyl group from S-adenosyl-L-methionine (SAM). It allows to synthesize pimeloyl-ACP via the fatty acid synthetic pathway. This is Malonyl-[acyl-carrier protein] O-methyltransferase from Magnetococcus marinus (strain ATCC BAA-1437 / JCM 17883 / MC-1).